Reading from the N-terminus, the 452-residue chain is MVEKKFLEAVKKYSLISEGDRILVAFSGGIDSTVLTYLLIKFRDHLKISDIYLAHLNHSLRKESDEDQRFCEDFAKKYGLEIFTKKVDIKSLAEKEKKSIEQKAREERYSFFRKVMEERSINRLATGHHLSDLVETMIMWFIQGNRKGIKGFRPKERDIIRPLYLINKDQIENYAREKGIEYRIDITNFETDFLRNRIRHNIIPHIKGINPSLEGSLLTLSYFLSLDDQYLEEESEKISQKFLNGKIELEELLVYDKALVYRAIQNWIYRKTGVYPSYRQIMDIMEIIEKKEGTKSIRLSPEYNLIRRYSTLYIEKVKEKTEPYQYRIKPGEKIFVKEANLYIKSYIETDYTLDKLKDERKKVCFQIESMEDAEFVVRNRRKGDRFIPFGRKKEKKLKDVMIDLKIPSDMRENIPLVVYGNKILWIAGYKRSAYFPVTEKGKKLICFELEEV.

27 to 32 (SGGIDS) contributes to the ATP binding site.

This sequence belongs to the tRNA(Ile)-lysidine synthase family.

It localises to the cytoplasm. The enzyme catalyses cytidine(34) in tRNA(Ile2) + L-lysine + ATP = lysidine(34) in tRNA(Ile2) + AMP + diphosphate + H(+). Ligates lysine onto the cytidine present at position 34 of the AUA codon-specific tRNA(Ile) that contains the anticodon CAU, in an ATP-dependent manner. Cytidine is converted to lysidine, thus changing the amino acid specificity of the tRNA from methionine to isoleucine. The polypeptide is tRNA(Ile)-lysidine synthase (Persephonella marina (strain DSM 14350 / EX-H1)).